The sequence spans 804 residues: G-type lectin S-receptor-like serine/threonine-protein kinase At1g61500 (804 aa).

An N-terminal signal peptide occupies residues 1 to 24 (MMTRFACLHLFTMFLFTLLSGSSS). A Bulb-type lectin domain is found at 25-145 (AVITTESPLS…VSERALWQSF (121 aa)). Residues 25–427 (AVITTESPLS…ELDGNKRKKT (403 aa)) are Extracellular-facing. N-linked (GlcNAc...) asparagine glycosylation is found at N54, N135, and N237. Residues 279 to 315 (PKKLCDFYGACGPFGLCVMSPSPMCKCFRGFVPKSVE) enclose the EGF-like; atypical domain. 2 disulfide bridges follow: C283–C295 and C289–C303. N-linked (GlcNAc...) asparagine glycosylation is found at N321, N337, and N376. Positions 334-416 (CLGNSTGEDA…GELLSIRLAR (83 aa)) constitute a PAN domain. 2 cysteine pairs are disulfide-bonded: C369-C390 and C373-C379. Residues 428–448 (IVASIVSLTLFMILGFTAFGV) form a helical membrane-spanning segment. At 449–804 (WRCRVEHIAH…GMTQSVILGR (356 aa)) the chain is on the cytoplasmic side. A Protein kinase domain is found at 491-776 (FSLSNKLGQG…DLPSPKQPTF (286 aa)). Residues 497–505 (LGQGGFGSV) and K519 contribute to the ATP site. Residues S525 and S540 each carry the phosphoserine modification. Positions 580–597 (RKRLEIDWPKRFDIIQGI) are caM-binding. The Proton acceptor role is filled by D616. S620 and S633 each carry phosphoserine. T650 bears the Phosphothreonine mark. Phosphoserine occurs at positions 693 and 787.

It belongs to the protein kinase superfamily. Ser/Thr protein kinase family.

It localises to the cell membrane. It carries out the reaction L-seryl-[protein] + ATP = O-phospho-L-seryl-[protein] + ADP + H(+). It catalyses the reaction L-threonyl-[protein] + ATP = O-phospho-L-threonyl-[protein] + ADP + H(+). The protein is G-type lectin S-receptor-like serine/threonine-protein kinase At1g61500 of Arabidopsis thaliana (Mouse-ear cress).